The primary structure comprises 204 residues: LexA repressor (204 aa).

Positions 27 to 47 (VREIGEAVGLASSSTVHGHLA) form a DNA-binding region, H-T-H motif. Catalysis depends on for autocatalytic cleavage activity residues Ser-126 and Lys-164.

Belongs to the peptidase S24 family. As to quaternary structure, homodimer.

The catalysed reaction is Hydrolysis of Ala-|-Gly bond in repressor LexA.. Its function is as follows. Represses a number of genes involved in the response to DNA damage (SOS response), including recA and lexA. In the presence of single-stranded DNA, RecA interacts with LexA causing an autocatalytic cleavage which disrupts the DNA-binding part of LexA, leading to derepression of the SOS regulon and eventually DNA repair. This Listeria innocua serovar 6a (strain ATCC BAA-680 / CLIP 11262) protein is LexA repressor.